An 807-amino-acid polypeptide reads, in one-letter code: Microbial collagenase (807 aa).

The signal sequence occupies residues 1 to 27 (MSHLLPFPRRRLALACLLASISGASFG). His434 lines the Zn(2+) pocket. Glu435 is a catalytic residue. His438 serves as a coordination point for Zn(2+). Residues 562-585 (EVTPENPDTDPDTPTEPSDGVTQL) form a disordered region.

It belongs to the peptidase M9A family. It depends on Zn(2+) as a cofactor.

The protein localises to the secreted. It carries out the reaction Digestion of native collagen in the triple helical region at Xaa-|-Gly bonds. With synthetic peptides, a preference is shown for Gly at P3 and P1', Pro and Ala at P2 and P2', and hydroxyproline, Ala or Arg at P3'.. Its function is as follows. Possesses gelatinolytic activity. The protein is Microbial collagenase of Vibrio vulnificus (strain CMCP6).